The chain runs to 131 residues: Sec-independent protein translocase protein TatB (131 aa).

A helical membrane pass occupies residues 1–21; the sequence is MFDISFAELVVVGIVALIVIG. Polar residues-rich tracts occupy residues 71 to 93 and 111 to 131; these read NSFE…TQSA and PVNT…QPNS. Residues 71–131 form a disordered region; it reads NSFENSVRSE…APAEPRQPNS (61 aa).

It belongs to the TatB family. The Tat system comprises two distinct complexes: a TatABC complex, containing multiple copies of TatA, TatB and TatC subunits, and a separate TatA complex, containing only TatA subunits. Substrates initially bind to the TatABC complex, which probably triggers association of the separate TatA complex to form the active translocon.

The protein localises to the cell inner membrane. Part of the twin-arginine translocation (Tat) system that transports large folded proteins containing a characteristic twin-arginine motif in their signal peptide across membranes. Together with TatC, TatB is part of a receptor directly interacting with Tat signal peptides. TatB may form an oligomeric binding site that transiently accommodates folded Tat precursor proteins before their translocation. In Nitrosomonas europaea (strain ATCC 19718 / CIP 103999 / KCTC 2705 / NBRC 14298), this protein is Sec-independent protein translocase protein TatB.